The sequence spans 700 residues: Polycomb protein suz12 (700 aa).

2 disordered regions span residues 215–250 (DFNG…EGDK) and 319–376 (TNDT…RDVS). The segment covering 218–228 (GLTNGETNENI) has biased composition (polar residues). A C2H2-type zinc finger spans residues 405-428 (LHCPWCTLNCRKLYSLLKHLKLCH). Positions 520-596 (RLYFHSDTCL…NQMNHGCMLF (77 aa)) are VEFS-box. The interval 651–700 (LAPPSDEAFEEPNRTTSSSSSFMETNGKDRVVENDCVSGQPPKHSKKQKP) is disordered. Residues 664–674 (RTTSSSSSFME) are compositionally biased toward polar residues.

This sequence belongs to the VEFS (VRN2-EMF2-FIS2-SU(Z)12) family. Component of the prc2/eed-ezh2 complex.

It localises to the nucleus. Polycomb group (PcG) protein. Component of the prc2/eed-ezh2 complex, which methylates 'Lys-9' (H3K9me) and 'Lys-27' (H3K27me) of histone H3, leading to transcriptional repression of the affected target gene. The sequence is that of Polycomb protein suz12 (suz12) from Xenopus tropicalis (Western clawed frog).